Here is a 371-residue protein sequence, read N- to C-terminus: Cytoplasmic dynein intermediate light chain DYN3 (371 aa).

The protein belongs to the dynein light intermediate chain DYN3 family. The cytoplasmic dynein is composed of at least two heavy chains and a number of intermediate and light chains.

Its subcellular location is the cytoplasm. The protein resides in the cytoskeleton. Functionally, component of the cytoplasmic dynein which acts as a motor for the intracellular retrograde motility of vesicles and organelles along microtubules. May play an important role in the proper orientation of the mitotic spindle into the budding daughter cell yeast. Probably required for normal progression of the cell cycle. The protein is Cytoplasmic dynein intermediate light chain DYN3 (DYN3) of Eremothecium gossypii (strain ATCC 10895 / CBS 109.51 / FGSC 9923 / NRRL Y-1056) (Yeast).